Here is a 484-residue protein sequence, read N- to C-terminus: Protein phosphatase 1B (484 aa).

Over residues 1–14 the composition is skewed to basic and acidic residues; the sequence is MGAFLDKPKTEKHN. The interval 1 to 20 is disordered; the sequence is MGAFLDKPKTEKHNAHGAGN. Gly-2 is lipidated: N-myristoyl glycine. Residue Lys-12 forms a Glycyl lysine isopeptide (Lys-Gly) (interchain with G-Cter in ISG15) linkage. In terms of domain architecture, PPM-type phosphatase spans 23 to 295; that stretch reads RYGLSSMQGW…DNMSIVLVCF (273 aa). Mn(2+)-binding residues include Asp-60 and Gly-61. Lys-142 is covalently cross-linked (Glycyl lysine isopeptide (Lys-Gly) (interchain with G-Cter in ISG15)). 2 residues coordinate Mn(2+): Asp-243 and Asp-286. Residue Ser-391 is modified to Phosphoserine. The tract at residues 431-484 is disordered; sequence EENPAEQAATAASSNSDAGNTVAMQESHTESKSDLAELDSCTEDAGTKMSGEKL. Positions 440 to 456 are enriched in polar residues; sequence TAASSNSDAGNTVAMQE.

Belongs to the PP2C family. As to quaternary structure, monomer. Interacts with PAK6. Interacts with the phosphorylated form of IKBKB/IKKB. Requires Mg(2+) as cofactor. The cofactor is Mn(2+). In terms of processing, isgylation negatively regulates its activity. N-myristoylation is essential for the recognition of its substrates for dephosphorylation.

It is found in the cytoplasm. Its subcellular location is the cytosol. It localises to the membrane. The catalysed reaction is O-phospho-L-seryl-[protein] + H2O = L-seryl-[protein] + phosphate. The enzyme catalyses O-phospho-L-threonyl-[protein] + H2O = L-threonyl-[protein] + phosphate. Its function is as follows. Enzyme with a broad specificity. Dephosphorylates PRKAA1 and PRKAA2. Inhibits TBK1-mediated antiviral signaling by dephosphorylating it at 'Ser-172'. Plays an important role in the termination of TNF-alpha-mediated NF-kappa-B activation through dephosphorylating and inactivating IKBKB/IKKB. This Bos taurus (Bovine) protein is Protein phosphatase 1B (PPM1B).